Reading from the N-terminus, the 475-residue chain is MSPKTETKASVGFKAGVKDYRLTYYTPEYETLATDILAAFRVTPQPGVPPEEAGAAVAAESSTGTWTTVWTDGLTSLDRYKGRCYHIEPVAGEENQYIAYVAYPLDLFEEGSVTNMFTSIVGNVFGFKALRALRLEDLRIPPAYSKTFQGPPHGIQVERDKLNKYGRPLLGCTIKPKLGLSAKNYGRAVYECLRGGLDFTKDDENVNSQPFMRWRDRFLFCAEAIYKAQAETGEIKGHYLNATAGTSEEMMKRAVCARELGVPIVMHDYLTGGFTANTSLAHYCRDNGLLLHIHRAMHAVIDRQRNHGIHFRVLAKALRMSGGDHIHAGTVVGKLEGERDVTLGFVDLLRDDFIEKDRSRGIYFTQDWVSMPGVLPVASGGIHVWHMPALTEIFGDDSVLQFGGGTLGHPWGNAPGAVANRVALEACVQARNEGRDLAREGNEVIREASKWSPELAAACEVWKEIKFEFEAMDVL.

Positions 1 to 2 (MS) are excised as a propeptide. At P3 the chain carries N-acetylproline. K14 bears the N6,N6,N6-trimethyllysine mark. Substrate is bound by residues N123 and T173. K175 acts as the Proton acceptor in catalysis. Residue K177 coordinates substrate. Mg(2+) is bound by residues K201, D203, and E204. An N6-carboxylysine modification is found at K201. H294 serves as the catalytic Proton acceptor. 3 residues coordinate substrate: R295, H327, and S379.

It belongs to the RuBisCO large chain family. Type I subfamily. As to quaternary structure, heterohexadecamer of 8 large chains and 8 small chains. Mg(2+) is required as a cofactor.

Its subcellular location is the plastid. The protein resides in the chloroplast. It carries out the reaction 2 (2R)-3-phosphoglycerate + 2 H(+) = D-ribulose 1,5-bisphosphate + CO2 + H2O. The catalysed reaction is D-ribulose 1,5-bisphosphate + O2 = 2-phosphoglycolate + (2R)-3-phosphoglycerate + 2 H(+). Its function is as follows. RuBisCO catalyzes two reactions: the carboxylation of D-ribulose 1,5-bisphosphate, the primary event in carbon dioxide fixation, as well as the oxidative fragmentation of the pentose substrate in the photorespiration process. Both reactions occur simultaneously and in competition at the same active site. This Nymphaea alba (White water-lily) protein is Ribulose bisphosphate carboxylase large chain.